The chain runs to 396 residues: S-adenosylmethionine decarboxylase proenzyme (396 aa).

Active-site residues include glutamate 29 and glutamate 32. Residue serine 88 is the Schiff-base intermediate with substrate; via pyruvic acid of the active site. Position 88 is a pyruvic acid (Ser); by autocatalysis (serine 88). Cysteine 102 (proton donor; for catalytic activity) is an active-site residue. Residues serine 287 and histidine 301 each act as proton acceptor; for processing activity in the active site.

Belongs to the eukaryotic AdoMetDC family. Pyruvate is required as a cofactor. Is synthesized initially as an inactive proenzyme. Formation of the active enzyme involves a self-maturation process in which the active site pyruvoyl group is generated from an internal serine residue via an autocatalytic post-translational modification. Two non-identical subunits are generated from the proenzyme in this reaction, and the pyruvate is formed at the N-terminus of the alpha chain, which is derived from the carboxyl end of the proenzyme. The post-translation cleavage follows an unusual pathway, termed non-hydrolytic serinolysis, in which the side chain hydroxyl group of the serine supplies its oxygen atom to form the C-terminus of the beta chain, while the remainder of the serine residue undergoes an oxidative deamination to produce ammonia and the pyruvoyl group blocking the N-terminus of the alpha chain.

The enzyme catalyses S-adenosyl-L-methionine + H(+) = S-adenosyl 3-(methylsulfanyl)propylamine + CO2. The protein operates within amine and polyamine biosynthesis; S-adenosylmethioninamine biosynthesis; S-adenosylmethioninamine from S-adenosyl-L-methionine: step 1/1. Its function is as follows. Catalyzes the decarboxylation of S-adenosylmethionine, a key step in the biosynthetic pathway for spermidine and spermine. It is essential for normal growth, sporulation, and maintenance of ds-RNA virus. The sequence is that of S-adenosylmethionine decarboxylase proenzyme (SPE2) from Saccharomyces cerevisiae (strain ATCC 204508 / S288c) (Baker's yeast).